The following is a 302-amino-acid chain: Methionyl-tRNA formyltransferase (302 aa).

108-111 lines the (6S)-5,6,7,8-tetrahydrofolate pocket; sequence SLLP.

The protein belongs to the Fmt family.

It carries out the reaction L-methionyl-tRNA(fMet) + (6R)-10-formyltetrahydrofolate = N-formyl-L-methionyl-tRNA(fMet) + (6S)-5,6,7,8-tetrahydrofolate + H(+). Attaches a formyl group to the free amino group of methionyl-tRNA(fMet). The formyl group appears to play a dual role in the initiator identity of N-formylmethionyl-tRNA by promoting its recognition by IF2 and preventing the misappropriation of this tRNA by the elongation apparatus. The protein is Methionyl-tRNA formyltransferase of Cereibacter sphaeroides (strain ATCC 17025 / ATH 2.4.3) (Rhodobacter sphaeroides).